A 233-amino-acid chain; its full sequence is Large ribosomal subunit protein uL1 (233 aa).

This sequence belongs to the universal ribosomal protein uL1 family. In terms of assembly, part of the 50S ribosomal subunit.

Binds directly to 23S rRNA. The L1 stalk is quite mobile in the ribosome, and is involved in E site tRNA release. Its function is as follows. Protein L1 is also a translational repressor protein, it controls the translation of the L11 operon by binding to its mRNA. This is Large ribosomal subunit protein uL1 from Aeromonas salmonicida (strain A449).